The following is a 1156-amino-acid chain: ATP-dependent RNA helicase glh-4 (1156 aa).

Disordered regions lie at residues 1–81 (MSFS…GAPS), 194–213 (TGVG…GQQP), 231–423 (SSSG…DSST), and 436–522 (HRAS…SGLG). A compositionally biased stretch (basic and acidic residues) spans 12–22 (AEVKVAEDVPE). Residues 24–34 (NVPPPVEPPRA) are compositionally biased toward pro residues. Composition is skewed to polar residues over residues 60-73 (ITTS…TTPK), 194-211 (TGVG…SFGQ), and 243-258 (TESS…TSQP). Gly residues predominate over residues 259–281 (GFGGDSSTGFGSGLKAGFGGHGA). The span at 307–319 (ASSSNESAFGQQS) shows a compositional bias: polar residues. 2 stretches are compositionally biased toward gly residues: residues 321 to 332 (GFGGATKNGFGG) and 342 to 358 (SKAG…GGQK). Composition is skewed to polar residues over residues 362–371 (TESSGFPTKE) and 395–406 (PSTTDSSSGQQT). Gly residues predominate over residues 408 to 423 (GFGGASKPGFGGDSST). Polar residues-rich tracts occupy residues 440–451 (TAENSGLPTETT) and 464–476 (ASSS…GQQS). The segment covering 478–489 (GFGGATKNGFGG) has biased composition (gly residues). 5 consecutive CCHC-type zinc fingers follow at residues 570-587 (RGCH…ECDK), 593-610 (FPCR…DCDQ), 616-633 (GPCR…DCDQ), 639-656 (GPCR…DCQN), and 665-682 (EPCR…ECPT). Residues 736 to 764 (SFDGFKILPQDLHDNLKRMKMNRPTPIQR) carry the Q motif motif. The Helicase ATP-binding domain occupies 767–951 (FFPIMHGNDV…LPKFVKEGYT (185 aa)). 780 to 787 (AHTGSGKT) contacts ATP. Positions 897–900 (DEAD) match the DEAD box motif. Residues 986–1139 (GIDENTVTLL…EVPEWLTEGA (154 aa)) form the Helicase C-terminal domain. Positions 1135 to 1156 (LTEGAGHQEEGGDDWNEQEQEW) are disordered. Over residues 1145–1156 (GGDDWNEQEQEW) the composition is skewed to acidic residues.

Belongs to the DEAD box helicase family. DDX4/VASA subfamily. As to quaternary structure, interacts (via C-terminus) with kgb-1.

It catalyses the reaction ATP + H2O = ADP + phosphate + H(+). Functionally, probable ATP-binding RNA helicase. May act redundantly with the P-granule component glh-1 to regulate the formation of the granular structure of P-granules in embryos. May protect somatic cells from excessive apoptosis during normal development. This is ATP-dependent RNA helicase glh-4 from Caenorhabditis elegans.